A 521-amino-acid polypeptide reads, in one-letter code: MSPALYASTFKCEVDENPSLMGSYYASLYPNLPILENSATSTWILNPFSDHETETIRDHKKLKRSTVTIPIWFANFSSHSNSFFNNINSNNNSVNSIPRLHFRDHIRTYKQRYFASEAVEEAAEDNFNYNNCEAEEDGSCADGMRLVQLLIACAEAVACRDKSHASVLLSELKSNALVFGSSFQRVASCFVQGLTERLTLIQPIGNNSAGSDTKSMMNIMDAASEEMEEAFKLVYENCPHIQFGHFVANSIILEAFEGESFLHVVDLGMSLGLPHGHQWRGLIQSLADRSSHRVRRLRITAIGLCIARIQVIGEELSIYAKNLGIHLEFSIVEKNLENLKPKDIKVNEKEVLVVNSILQLHCVVKESRGALNAVLQMIHGLSPKVLVMAEQDSGHNGPFFLGRFMESLHYYSAIFDSLDAMLPKYDTKRAKMEQFYFAEEIKNIVSCEGPLRMERHEKVDQWRRRMSRAGFQGSPIKMVVQAKQWLVKNNVCDGYTVVEEKGCLVLGWKSKPIVAVSCWKC.

The 384-residue stretch at 137–520 (DGSCADGMRL…KPIVAVSCWK (384 aa)) folds into the GRAS domain. Residues 144–212 (MRLVQLLIAC…PIGNNSAGSD (69 aa)) are leucine repeat I (LRI). Residues 231-301 (FKLVYENCPH…HRVRRLRITA (71 aa)) form a VHIID region. The VHIID motif lies at 262–266 (LHVVD). The segment at 311–343 (VIGEELSIYAKNLGIHLEFSIVEKNLENLKPKD) is leucine repeat II (LRII). The segment at 352 to 443 (LVVNSILQLH…QFYFAEEIKN (92 aa)) is PFYRE. The SAW stretch occupies residues 446-520 (SCEGPLRMER…KPIVAVSCWK (75 aa)).

The protein belongs to the GRAS family. Interacts with RAM1. Interacts with NSP2.

The protein localises to the nucleus. Functionally, transcription factor acting as a regulator of arbuscular mycorrhiza (AM)-related genes (e.g. STR). Required for the morphogenesis of arbuscules upon symbiosis with AM fungi (e.g. Glomus versiforme). Also involved in restricting mycorrhizal colonization of the root meristem. In Medicago truncatula (Barrel medic), this protein is GRAS family protein RAD1.